The sequence spans 740 residues: MRGGSRHLSNEEDVSGCEDCIIISGTCSDQSSDPKTVPLTQVLEAVCTVENRGCRTSSQPSKRKASSLISYVQDLTGDGDEDRDGEVGGSSGSGTPVMPQLFCETRIPSKTPAPLSWQANTSASTPWLSPASPYPIIDLTDEDVIPQSISTPSVDWSQDSHQEGMDTTQVDAESRDGGNIEYQVSADKLLLSQSCILAAFYKLVPYRESIYRTLEKARVRAGKACPSSPGESLEDQLKPMLEWAHGGFKPTGIEGLKPNKKQPENKSRRRTTNDPAASESSPPKRLKTNSYGGKDRGEDEESREQMASDVTNNKGNLEDHCLSCGRKDPVSFHPLFEGGLCQSCRDRFLELFYMYDEDGYQSYCTVCCEGRELLLCSNTSCCRCFCVECLEVLVGAGTAEDVKLQEPWSCYMCLPQRCHGVLRRRKDWNMRLQDFFTTDPDLEEFEPPKLYPAIPAAKRRPIRVLSLFDGIATGYLVLKELGIKVEKYIASEVCAESIAVGTVKHEGQIKYVDDIRNITKEHIDEWGPFDLVIGGSPCNDLSCVNPVRKGLFEGTGRLFFEFYRLLNYSCPEEEDDRPFFWMFENVVAMEVGDKRDISRFLECNPVMIDAIKVSAAHRARYFWGNLPGMNRPVMASKNDKLELQDCLEFSRTAKLKKVQTITTKSNSIRQGKNQLFPVVMNGKDDVLWCTELERIFGFPEHYTDVSNMGRGARQKLLGRSWSVPVIRHLFAPLKDHFACE.

Disordered regions lie at residues 75-99 and 248-312; these read LTGDGDEDRDGEVGGSSGSGTPVMP and FKPT…DVTN. The ADD domain maps to 309 to 441; it reads DVTNNKGNLE…LQDFFTTDPD (133 aa). The GATA-type; atypical zinc finger occupies 320–350; sequence HCLSCGRKDPVSFHPLFEGGLCQSCRDRFLE. The segment at 361 to 417 adopts a PHD-type; atypical zinc-finger fold; it reads QSYCTVCCEGRELLLCSNTSCCRCFCVECLEVLVGAGTAEDVKLQEPWSCYMCLPQR. Residues 462 to 740 form the SAM-dependent MTase C5-type domain; that stretch reads IRVLSLFDGI…APLKDHFACE (279 aa). 5 residues coordinate S-adenosyl-L-methionine: I471, T473, E492, D514, and I515. Residue C538 is part of the active site. The S-adenosyl-L-methionine site is built by R719 and W721.

Belongs to the class I-like SAM-binding methyltransferase superfamily. C5-methyltransferase family. As to quaternary structure, homodimer. Interacts with DNMT3L. Interacts with SPOCD1; recruiting Dnmt3C to transposons. As to expression, specifically expressed in testis.

The protein resides in the nucleus. The enzyme catalyses a 2'-deoxycytidine in DNA + S-adenosyl-L-methionine = a 5-methyl-2'-deoxycytidine in DNA + S-adenosyl-L-homocysteine + H(+). In terms of biological role, DNA methyltransferase that specifically methylates the promoters of evolutionarily young retrotransposons in the male germline. De novo methylation and subsequent repression of transposable elements prevents their mobilization, which is essential for germline integrity. Compared to Dnmt3a and Dnmt3b, shows lower DNA methyltransferase efficiency. The polypeptide is DNA (cytosine-5)-methyltransferase 3C (Mus musculus (Mouse)).